Reading from the N-terminus, the 383-residue chain is Acetylornithine deacetylase (383 aa).

His80 is a Zn(2+) binding site. Asp82 is a catalytic residue. Position 112 (Asp112) interacts with Zn(2+). Residue Glu144 is part of the active site. Zn(2+) contacts are provided by Glu145, Glu169, and His355.

The protein belongs to the peptidase M20A family. ArgE subfamily. Homodimer. It depends on Zn(2+) as a cofactor. The cofactor is Co(2+). Glutathione serves as cofactor.

The protein localises to the cytoplasm. The catalysed reaction is N(2)-acetyl-L-ornithine + H2O = L-ornithine + acetate. The protein operates within amino-acid biosynthesis; L-arginine biosynthesis; L-ornithine from N(2)-acetyl-L-ornithine (linear): step 1/1. Catalyzes the hydrolysis of the amide bond of N(2)-acetylated L-amino acids. Cleaves the acetyl group from N-acetyl-L-ornithine to form L-ornithine, an intermediate in L-arginine biosynthesis pathway, and a branchpoint in the synthesis of polyamines. This is Acetylornithine deacetylase from Salmonella arizonae (strain ATCC BAA-731 / CDC346-86 / RSK2980).